A 103-amino-acid polypeptide reads, in one-letter code: UPF0102 protein aq_041 (103 aa).

The protein belongs to the UPF0102 family.

The protein is UPF0102 protein aq_041 of Aquifex aeolicus (strain VF5).